The primary structure comprises 228 residues: UPF0173 metal-dependent hydrolase LMOf2365_1599 (228 aa).

This sequence belongs to the UPF0173 family.

This is UPF0173 metal-dependent hydrolase LMOf2365_1599 from Listeria monocytogenes serotype 4b (strain F2365).